Here is a 513-residue protein sequence, read N- to C-terminus: ATP synthase subunit alpha 2 (513 aa).

Residue 152–159 (GDSKTGKT) participates in ATP binding.

It belongs to the ATPase alpha/beta chains family. In terms of assembly, F-type ATPases have 2 components, CF(1) - the catalytic core - and CF(0) - the membrane proton channel. CF(1) has five subunits: alpha(3), beta(3), gamma(1), delta(1), epsilon(1). CF(0) has three main subunits: a(1), b(2) and c(9-12). The alpha and beta chains form an alternating ring which encloses part of the gamma chain. CF(1) is attached to CF(0) by a central stalk formed by the gamma and epsilon chains, while a peripheral stalk is formed by the delta and b chains.

It localises to the cell membrane. It carries out the reaction ATP + H2O + 4 H(+)(in) = ADP + phosphate + 5 H(+)(out). In terms of biological role, produces ATP from ADP in the presence of a proton gradient across the membrane. The alpha chain is a regulatory subunit. This chain is ATP synthase subunit alpha 2, found in Mycoplasmopsis pulmonis (strain UAB CTIP) (Mycoplasma pulmonis).